Here is a 266-residue protein sequence, read N- to C-terminus: Tryptophan synthase alpha chain (266 aa).

Active-site proton acceptor residues include E49 and D60.

It belongs to the TrpA family. Tetramer of two alpha and two beta chains.

It catalyses the reaction (1S,2R)-1-C-(indol-3-yl)glycerol 3-phosphate + L-serine = D-glyceraldehyde 3-phosphate + L-tryptophan + H2O. The protein operates within amino-acid biosynthesis; L-tryptophan biosynthesis; L-tryptophan from chorismate: step 5/5. Its function is as follows. The alpha subunit is responsible for the aldol cleavage of indoleglycerol phosphate to indole and glyceraldehyde 3-phosphate. This Opitutus terrae (strain DSM 11246 / JCM 15787 / PB90-1) protein is Tryptophan synthase alpha chain.